The chain runs to 201 residues: Oxalate oxidase 1 (201 aa).

Cysteine 10 and cysteine 26 are disulfide-bonded. The Cupin type-1 domain maps to 40–191; sequence SKLTKAGNTS…ALRVEAGVVE (152 aa). Asparagine 47 carries N-linked (GlcNAc...) asparagine glycosylation. Residues asparagine 75 and asparagine 85 each contribute to the oxalate site. Mn(2+) contacts are provided by histidine 88, histidine 90, glutamate 95, and histidine 137. 2 residues coordinate oxalate: histidine 90 and glutamate 95.

The protein belongs to the germin family. As to quaternary structure, homo hexamer; a trimer of dimers. In terms of processing, glycosylated. A form called G contains antennary GlcNAc residues, whereas a form called G' lacks antennary GlcNAc residues in its otherwise identical glycans.

It is found in the secreted. The protein localises to the extracellular space. It localises to the apoplast. The protein resides in the cell wall. It catalyses the reaction oxalate + O2 + 2 H(+) = H2O2 + 2 CO2. In terms of biological role, releases hydrogen peroxide in the apoplast which may be important for cross-linking reactions in the cell wall biochemistry. May play an important role in several aspects of plant growth and defense mechanisms. This is Oxalate oxidase 1 from Hordeum vulgare (Barley).